The primary structure comprises 87 residues: Selenoprotein W (87 aa).

Residues 10-13 (CGAU) constitute a cross-link (cysteinyl-selenocysteine (Cys-Sec); redox-active). A non-standard amino acid (selenocysteine) is located at residue selenocysteine 13. Cysteine 37 bears the S-glutathionyl cysteine mark.

The protein belongs to the SelWTH family. Selenoprotein W subfamily. Interacts with DPYSL2, PRDX1, YWHAB, YWHAG, HSP70 and HSP90. Highest levels detected in skeletal muscle, tongue, heart and brain. Expressed at significantly higher levels in female skeletal muscle than in male and at slightly higher levels in female cardiac muscle than in male (at protein level). Also detected at low levels in liver.

It localises to the cytoplasm. In terms of biological role, plays a role as a glutathione (GSH)-dependent antioxidant. May be involved in a redox-related process. May play a role in the myopathies of selenium deficiency. The protein is Selenoprotein W of Macaca mulatta (Rhesus macaque).